The chain runs to 660 residues: Probable serine/threonine-protein kinase CE0033 (660 aa).

Positions 9 to 278 (YELGASIGSG…AEMAADLELL (270 aa)) constitute a Protein kinase domain. ATP is bound by residues 15–23 (IGSGGMSEV) and lysine 38. The Proton acceptor role is filled by aspartate 136. The interval 288–319 (RAHVEKPDEPETVVVPQRLSTPPPPPTPAMPA) is disordered. PASTA domains follow at residues 377 to 443 (SAST…TISS), 444 to 512 (GREV…TVST), and 513 to 577 (GPSL…EISN).

Belongs to the protein kinase superfamily. Ser/Thr protein kinase family.

The enzyme catalyses L-seryl-[protein] + ATP = O-phospho-L-seryl-[protein] + ADP + H(+). It catalyses the reaction L-threonyl-[protein] + ATP = O-phospho-L-threonyl-[protein] + ADP + H(+). This is Probable serine/threonine-protein kinase CE0033 from Corynebacterium efficiens (strain DSM 44549 / YS-314 / AJ 12310 / JCM 11189 / NBRC 100395).